The chain runs to 186 residues: Photosystem I assembly protein Ycf4 (186 aa).

A run of 2 helical transmembrane segments spans residues 26–46 (WATI…SSYF) and 66–86 (IVMT…WLTI).

Belongs to the Ycf4 family.

The protein localises to the plastid. The protein resides in the chloroplast thylakoid membrane. Seems to be required for the assembly of the photosystem I complex. The protein is Photosystem I assembly protein Ycf4 of Pyropia yezoensis (Susabi-nori).